We begin with the raw amino-acid sequence, 632 residues long: MQREEGFNTKMADGPDEYDTEAGCVPLLHPEEIKPQSHYNHGYGEPLGRKTHIDDYSTWDIVKATQYGIYERCRELVEAGYDVRQPDKENVTLLHWAAINNRIDLVKYYISKGAIVDQLGGDLNSTPLHWATRQGHLSMVVQLMKYGADPSLIDGEGCSCIHLAAQFGHTSIVAYLIAKGQDVDMMDQNGMTPLMWAAYRTHSVDPTRLLLTFNVSVNLGDKYHKNTALHWAVLAGNTTVISLLLEAGANVDAQNIKGESALDLAKQRKNVWMINHLQEARQAKGYDNPSFLRKLKADKEFRQKVMLGTPFLVIWLVGFIADLNIDSWLIKGLMYGGVWATVQFLSKSFFDHSMHSALPLGIYLATKFWMYVTWFFWFWNDLNFLFIHLPFLANSVALFYNFGKSWKSDPGIIKATEEQKKKTIVELAETGSLDLSIFCSTCLIRKPVRSKHCGVCNRCIAKFDHHCPWVGNCVGAGNHRYFMGYLFFLLFMICWMIYGCISYWGLHCETTYTKDGFWTYITQIATCSPWMFWMFLNSVFHFMWVAVLLMCQMYQISCLGITTNERMNARRYKHFKVTTTSIESPFNHGCVRNIIDFFEFRCCGLFRPVIVDWTRQYTIEYDQISGSGYQLV.

Topologically, residues 1 to 304 are cytoplasmic; it reads MQREEGFNTK…LKADKEFRQK (304 aa). The segment at 11-305 is necessary and sufficient for interaction with DNAJC5 and SNAP25; that stretch reads MADGPDEYDT…KADKEFRQKV (295 aa). 7 ANK repeats span residues 51–86, 89–118, 123–152, 156–185, 189–219, 224–253, and 257–286; these read THID…VRQP, ENVT…IVDQ, LNST…DPSL, EGCS…DVDM, NGMT…SVNL, HKNT…NVDA, and KGES…AKGY. 2 helical membrane-spanning segments follow: residues 305 to 325 and 326 to 346; these read VMLG…DLNI and DSWL…QFLS. Over 347-357 the chain is Cytoplasmic; sequence KSFFDHSMHSA. The helical transmembrane segment at 358–378 threads the bilayer; sequence LPLGIYLATKFWMYVTWFFWF. At 379 to 381 the chain is on the lumenal side; sequence WND. The helical transmembrane segment at 382–402 threads the bilayer; sequence LNFLFIHLPFLANSVALFYNF. Over 403–480 the chain is Cytoplasmic; sequence GKSWKSDPGI…GNCVGAGNHR (78 aa). The DHHC domain maps to 437–487; the sequence is IFCSTCLIRKPVRSKHCGVCNRCIAKFDHHCPWVGNCVGAGNHRYFMGYLF. Catalysis depends on C467, which acts as the S-palmitoyl cysteine intermediate. A helical transmembrane segment spans residues 481-501; sequence YFMGYLFFLLFMICWMIYGCI. The Lumenal portion of the chain corresponds to 502-529; that stretch reads SYWGLHCETTYTKDGFWTYITQIATCSP. A helical membrane pass occupies residues 530–550; the sequence is WMFWMFLNSVFHFMWVAVLLM. The Cytoplasmic segment spans residues 551-632; that stretch reads CQMYQISCLG…QISGSGYQLV (82 aa).

The protein belongs to the DHHC palmitoyltransferase family. AKR/ZDHHC17 subfamily. As to quaternary structure, interacts (via ANK repeats) with numerous proteins (via the consensus sequence motif [VIAP]-[VIT]-x-x-Q-P). Interacts (via ANK repeats) with CLIP3. Interacts (via ANK repeats) with HTT; this interaction is inversely correlated to the length of the polyglutamine tract added to the huntingtin protein in Huntington disease. Interacts (via ANK repeats) with DNAJC5 (via C-terminus). Interacts (via ANK repeats) with MAP6. Interacts (via ANK repeats) with SNAP23. Interacts (via ANK repeats) with SNAP25. Interacts (via ANK repeats) with EVL. Interacts with SPRED1 and SPRED3. Interacts with GPM6A and OPTN. May interact (via ANK repeats) with SPRED2. May interact with NTRK1; may regulate its localization and function. Autopalmitoylated. Autopalmitoylation has a regulatory role in ZDHHC17-mediated Mg(2+) transport. Expressed in all brain regions. Expression is highest in the cortex, cerebellum, occipital lobe and caudate and lowest in the spinal cord. Expression is also seen in testis, pancreas, heart and kidney.

The protein resides in the golgi apparatus membrane. The protein localises to the cytoplasmic vesicle membrane. It localises to the presynaptic cell membrane. The catalysed reaction is L-cysteinyl-[protein] + hexadecanoyl-CoA = S-hexadecanoyl-L-cysteinyl-[protein] + CoA. It carries out the reaction L-cysteinyl-[protein] + tetradecanoyl-CoA = S-tetradecanoyl-L-cysteinyl-[protein] + CoA. The enzyme catalyses L-cysteinyl-[protein] + octadecanoyl-CoA = S-octadecanoyl-L-cysteinyl-[protein] + CoA. Functionally, palmitoyltransferase that catalyzes the addition of palmitate onto various protein substrates and is involved in a variety of cellular processes. Has no stringent fatty acid selectivity and in addition to palmitate can also transfer onto target proteins myristate from tetradecanoyl-CoA and stearate from octadecanoyl-CoA. Palmitoyltransferase specific for a subset of neuronal proteins, including SNAP25, DLG4/PSD95, GAD2, SYT1 and HTT. Also palmitoylates neuronal protein GPM6A as well as SPRED1 and SPRED3. Could also play a role in axonogenesis through the regulation of NTRK1 and the downstream ERK1/ERK2 signaling cascade. May be involved in the sorting or targeting of critical proteins involved in the initiating events of endocytosis at the plasma membrane. May play a role in Mg(2+) transport. Could also palmitoylate DNAJC5 and regulate its localization to the Golgi membrane. Palmitoylates CASP6, thereby preventing its dimerization and subsequent activation. The polypeptide is Palmitoyltransferase ZDHHC17 (Homo sapiens (Human)).